The chain runs to 197 residues: Auxin-responsive protein IAA19 (197 aa).

The EAR-like (transcriptional repression) signature appears at 13–17 (LRLGL). A compositionally biased stretch (polar residues) spans 35–47 (MNMTSSGSNSDQC). The segment at 35–67 (MNMTSSGSNSDQCESGVVSSGGDAEKVNDSPAA) is disordered. The PB1 domain occupies 96–184 (LGYVKVSMDG…KRLRIMKRSD (89 aa)).

Belongs to the Aux/IAA family. Homodimers and heterodimers. Interacts with the auxin response factor ARF7.

The protein localises to the nucleus. Its function is as follows. Aux/IAA proteins are short-lived transcriptional factors that function as repressors of early auxin response genes at low auxin concentrations. Repression is thought to result from the interaction with auxin response factors (ARFs), proteins that bind to the auxin-responsive promoter element (AuxRE). Formation of heterodimers with ARF proteins may alter their ability to modulate early auxin response genes expression. The protein is Auxin-responsive protein IAA19 (IAA19) of Arabidopsis thaliana (Mouse-ear cress).